Reading from the N-terminus, the 152-residue chain is Small ribosomal subunit protein bS6 (152 aa).

Residues His-96 to Ala-152 form a disordered region.

This sequence belongs to the bacterial ribosomal protein bS6 family.

Functionally, binds together with bS18 to 16S ribosomal RNA. The protein is Small ribosomal subunit protein bS6 of Rhizobium etli (strain CIAT 652).